A 423-amino-acid chain; its full sequence is Glycine amidinotransferase, mitochondrial (423 aa).

The transit peptide at 1–43 (MLRVRCLRGGSRGAEAVHYIGSRLGGSLTGWVQRTFQSTQAAT) directs the protein to the mitochondrion. 2 positions are modified to phosphoserine: Ser46 and Ser49. Asp170 is a binding site for arginine. Residues Asp254 and His303 contribute to the active site. 4 residues coordinate arginine: Asp305, Arg322, Ser354, and Ser355. Lys385 carries the post-translational modification N6-acetyllysine. Cys407 acts as the Amidino-cysteine intermediate in catalysis.

It belongs to the amidinotransferase family. As to quaternary structure, homodimer. As to expression, expressed in kidney, brain, gonads, uterus, and embryonic head, chest and abdomen. Maternally expressed in the placenta and yolk sac of embryos.

The protein localises to the mitochondrion inner membrane. The enzyme catalyses L-arginine + glycine = guanidinoacetate + L-ornithine. It carries out the reaction 4-aminobutanoate + L-arginine = 4-guanidinobutanoate + L-ornithine. It catalyses the reaction beta-alanine + L-arginine = 3-guanidinopropanoate + L-ornithine. The catalysed reaction is taurine + L-arginine = taurocyamine + L-ornithine. It participates in amine and polyamine biosynthesis; creatine biosynthesis; creatine from L-arginine and glycine: step 1/2. In terms of biological role, transamidinase that catalyzes the transfer of the amidino group of L-arginine onto the amino moiety of acceptor metabolites such as glycine, beta-alanine, gamma-aminobutyric acid (GABA) and taurine yielding the corresponding guanidine derivatives. Catalyzes the rate-limiting step of creatine biosynthesis, namely the transfer of the amidino group from L-arginine to glycine to generate guanidinoacetate, which is then methylated by GAMT to form creatine. Provides creatine as a source for ATP generation in tissues with high energy demands, in particular skeletal muscle, heart and brain. This is Glycine amidinotransferase, mitochondrial (Gatm) from Mus musculus (Mouse).